A 92-amino-acid polypeptide reads, in one-letter code: MTRSVWKGPFVDGYLLKKADAALSSGRKDVIKTWSRRSTIMPQFVGLTFGVHNGHKHVPVLVSEDMVGMKFGEFAPTRNFPGHAADKKAKRK.

It belongs to the universal ribosomal protein uS19 family.

Functionally, protein S19 forms a complex with S13 that binds strongly to the 16S ribosomal RNA. The chain is Small ribosomal subunit protein uS19 from Caulobacter vibrioides (strain ATCC 19089 / CIP 103742 / CB 15) (Caulobacter crescentus).